The sequence spans 241 residues: Parkin coregulated gene protein homolog (241 aa).

As to quaternary structure, microtubule inner protein component of sperm flagellar doublet microtubules. Forms a large molecular chaperone complex containing heat shock proteins 70 and 90 and chaperonin components. Interacts with STIP1, PRKN, GPR37, HSPA8, TCP1/CCT1, CCT2, CCT3, CCT4, CCT5, CCT6A, CCT7 and CCT8. Interacts with MEIG1.

The protein resides in the cytoplasm. Its subcellular location is the cytoskeleton. It localises to the cilium axoneme. It is found in the flagellum axoneme. Functionally, microtubule inner protein (MIP) part of the dynein-decorated doublet microtubules (DMTs) in cilia axoneme, which is required for motile cilia beating. Suppresses cell death induced by accumulation of unfolded Pael receptor (Pael-R, a substrate of Parkin). Facilitates the formation of inclusions consisting of Pael-R, molecular chaperones, protein degradation molecules and itself when proteasome is inhibited. May play an important role in the formation of Lewy bodies and protection of dopaminergic neurons against Parkinson disease. This is Parkin coregulated gene protein homolog (Pacrg) from Mus musculus (Mouse).